The sequence spans 55 residues: Large ribosomal subunit protein bL33 (55 aa).

The protein belongs to the bacterial ribosomal protein bL33 family.

This chain is Large ribosomal subunit protein bL33, found in Azorhizobium caulinodans (strain ATCC 43989 / DSM 5975 / JCM 20966 / LMG 6465 / NBRC 14845 / NCIMB 13405 / ORS 571).